Reading from the N-terminus, the 418-residue chain is CinA-like protein (418 aa).

It belongs to the CinA family.

The chain is CinA-like protein from Leptospira interrogans serogroup Icterohaemorrhagiae serovar Lai (strain 56601).